Reading from the N-terminus, the 69-residue chain is Putative membrane protein insertion efficiency factor (69 aa).

Belongs to the UPF0161 family.

It localises to the cell membrane. In terms of biological role, could be involved in insertion of integral membrane proteins into the membrane. This is Putative membrane protein insertion efficiency factor from Clostridium botulinum (strain 657 / Type Ba4).